The following is a 2800-amino-acid chain: Probable serine/threonine-protein kinase roco5 (2800 aa).

The segment covering 1–61 (MEVIKKEKKD…EKEKDKEKDG (61 aa)) has biased composition (basic and acidic residues). Disordered stretches follow at residues 1-92 (MEVI…SAQS), 123-225 (TTTT…SPVD), and 417-437 (GINS…SSGI). Positions 77-86 (PTPPPPPPPS) are enriched in pro residues. Composition is skewed to low complexity over residues 123 to 134 (TTTTTTTTSSNN) and 143 to 170 (NNNT…SSNN). Residues 176–190 (INVTSLDSGGNNNAS) are compositionally biased toward polar residues. Basic and acidic residues predominate over residues 194–218 (ISNEHSPKNRKEKEKEKDKDNKEDS). The region spanning 227-508 (NRRKLVEGFM…VQVVKDIVNE (282 aa)) is the DH domain. The segment covering 417 to 429 (GINSANSNNNNNN) has biased composition (low complexity). The PH domain occupies 540-649 (KFLKEGILIE…WFQVLSQASL (110 aa)). 4 LRR repeats span residues 777–800 (NKSI…ALGD), 805–832 (NHSL…GILS), 834–856 (PSIT…HISK), and 861–885 (NQTL…IIDQ). Residues 926–946 (KQLQVNQKSTTPSTSTSTTSS) form a disordered region. Positions 934–946 (STTPSTSTSTTSS) are enriched in low complexity. LRR repeat units follow at residues 971 to 984 (LNKL…SRRI), 985 to 1007 (SDLK…ILKE), 1008 to 1031 (LKNL…ISEM), 1033 to 1056 (ELKL…TLCK), 1058 to 1077 (NHLD…SLSQ), 1078 to 1101 (LVNL…IFTR), 1128 to 1151 (AIKA…IGSI), 1152 to 1174 (SSLI…IGKL), 1175 to 1197 (SSLQ…LSQL), and 1199 to 1222 (TLKV…KISI). The Roc domain occupies 1244–1464 (KEKPCMRMKL…NHIVKLGKAE (221 aa)). Residues 1257 to 1264 (GQENVGKT), 1348 to 1352 (DFAGQ), and 1407 to 1410 (THLD) contribute to the GTP site. Residues 1473-1604 (RSYFQLENLI…KFEIVHPLPD (132 aa)) form the COR 1 domain. Disordered regions lie at residues 1605–1665 (PKAT…SLLN) and 1688–1711 (DQST…FSDS). Composition is skewed to low complexity over residues 1610-1645 (SSSS…SSTT), 1653-1665 (RTNS…SLLN), and 1688-1707 (DQST…SSNN). Positions 1717 to 1790 (KSSTKHLVPI…VKEFWKNGLL (74 aa)) constitute a COR 2 domain. Residues 1886–2008 (SQQQHHQQQQ…LNPDSTSSSN (123 aa)) are compositionally biased toward low complexity. 2 disordered regions span residues 1886 to 2011 (SQQQ…NETS) and 2050 to 2070 (RNTN…SSIV). Over residues 2050 to 2059 (RNTNKPKING) the composition is skewed to polar residues. Residues 2175-2440 (LEIIEKVGEG…PTFIDIHSRL (266 aa)) form the Protein kinase domain. Residues 2181–2189 (VGEGGFGIV) and Lys2202 contribute to the ATP site. Residue Asp2300 is the Proton acceptor of the active site. Low complexity-rich tracts occupy residues 2452–2490 (TTTN…GTTS), 2583–2654 (LKTP…SPIS), 2669–2685 (TTQT…PNPT), and 2694–2704 (SSLSSNSINKP). 2 disordered regions span residues 2452–2498 (TTTN…HPQL) and 2544–2800 (AGGN…AIPK). A compositionally biased stretch (pro residues) spans 2705-2723 (PSKPLPTPGGVTSPPPPPT). Residues 2730-2756 (IKFNSISAGNKTIGQSSTLPSSTLKQF) show a composition bias toward polar residues. Low complexity predominate over residues 2757–2787 (TANNNTSPSGSSSLPNSTVSSPSSSFLLRPT).

Belongs to the protein kinase superfamily. TKL Ser/Thr protein kinase family. ROCO subfamily.

It catalyses the reaction L-seryl-[protein] + ATP = O-phospho-L-seryl-[protein] + ADP + H(+). The enzyme catalyses L-threonyl-[protein] + ATP = O-phospho-L-threonyl-[protein] + ADP + H(+). Functionally, may act as a serine/threonine-protein kinase and guanine-nucleotide releasing factor. The chain is Probable serine/threonine-protein kinase roco5 (roco5) from Dictyostelium discoideum (Social amoeba).